The chain runs to 222 residues: Phosphate-specific transport system accessory protein PhoU homolog 1 (222 aa).

This sequence belongs to the PhoU family. In terms of assembly, homodimer.

The protein resides in the cytoplasm. Functionally, plays a role in the regulation of phosphate uptake. The protein is Phosphate-specific transport system accessory protein PhoU homolog 1 (phoU1) of Mycobacterium leprae (strain TN).